Here is a 253-residue protein sequence, read N- to C-terminus: Ribosome maturation factor RimP (253 aa).

Positions 186–199 (RRGKAAEREKKRDL) are enriched in basic and acidic residues. Residues 186 to 253 (RRGKAAEREK…RARRGEIDPD (68 aa)) form a disordered region. Low complexity predominate over residues 201–216 (LAPPLAPHAKPAAQAK). Residues 240–253 (LAADRARRGEIDPD) are compositionally biased toward basic and acidic residues.

This sequence belongs to the RimP family.

The protein resides in the cytoplasm. Its function is as follows. Required for maturation of 30S ribosomal subunits. The polypeptide is Ribosome maturation factor RimP (Bradyrhizobium sp. (strain BTAi1 / ATCC BAA-1182)).